The primary structure comprises 445 residues: Anthranilate N-benzoyltransferase protein 3 (445 aa).

Catalysis depends on proton acceptor residues His-164 and Asp-392.

Belongs to the plant acyltransferase family. Post-translationally, N-terminus is blocked.

It catalyses the reaction anthranilate + benzoyl-CoA = N-benzoylanthranilate + CoA. Its pathway is phytoalexin biosynthesis; methoxydianthramide B biosynthesis. Catalyzes the formation of N-benzoylanthranilate, in the course of methoxydianthramide B, a phytoalexin. Phytoalexins are produced in response to infection by parasites, and are essential for the expression of disease resistance. The sequence is that of Anthranilate N-benzoyltransferase protein 3 (HCBT3) from Dianthus caryophyllus (Carnation).